The primary structure comprises 212 residues: Endoplasmic reticulum vesicle protein 25 (212 aa).

A signal peptide spans 1-21 (MKSFAACVLLLCALFFEQVFA). Residues 22-181 (VRFDIPASTK…TNESTNRRVR (160 aa)) lie on the Lumenal side of the membrane. The GOLD domain maps to 34–122 (QVCIRDFVSE…SRSIELDIES (89 aa)). The helical transmembrane segment at 182-202 (NFSIAVIVVLVALGAWQVNYM) threads the bilayer. Over 203–212 (KNFFRAKHII) the chain is Cytoplasmic.

Belongs to the EMP24/GP25L family.

It localises to the endoplasmic reticulum membrane. It is found in the golgi apparatus membrane. In terms of biological role, constituent of COPII-coated endoplasmic reticulum-derived transport vesicles. Required for efficient transport of a subset of secretory proteins to the Golgi. Facilitates retrograde transport from the Golgi to the endoplasmic reticulum. The chain is Endoplasmic reticulum vesicle protein 25 (ERV25) from Kluyveromyces lactis (strain ATCC 8585 / CBS 2359 / DSM 70799 / NBRC 1267 / NRRL Y-1140 / WM37) (Yeast).